Here is a 615-residue protein sequence, read N- to C-terminus: UvrABC system protein C (615 aa).

A GIY-YIG domain is found at 12–91; that stretch reads EKPGVYIMKD…IKKYKPKYNV (80 aa). One can recognise a UVR domain in the interval 203-238; that stretch reads DWLIQKLKEDMKKAAEELRFEEAARIRDQIFAIERT.

This sequence belongs to the UvrC family. Interacts with UvrB in an incision complex.

It localises to the cytoplasm. In terms of biological role, the UvrABC repair system catalyzes the recognition and processing of DNA lesions. UvrC both incises the 5' and 3' sides of the lesion. The N-terminal half is responsible for the 3' incision and the C-terminal half is responsible for the 5' incision. This is UvrABC system protein C from Thermoanaerobacter pseudethanolicus (strain ATCC 33223 / 39E) (Clostridium thermohydrosulfuricum).